The following is a 425-amino-acid chain: Glutamyl-tRNA reductase (425 aa).

Residues 49 to 52 (TCNR), S107, 112 to 114 (EPQ), and Q118 contribute to the substrate site. The active-site Nucleophile is C50. 187 to 192 (GAGETI) serves as a coordination point for NADP(+).

The protein belongs to the glutamyl-tRNA reductase family. In terms of assembly, homodimer.

It carries out the reaction (S)-4-amino-5-oxopentanoate + tRNA(Glu) + NADP(+) = L-glutamyl-tRNA(Glu) + NADPH + H(+). Its pathway is porphyrin-containing compound metabolism; protoporphyrin-IX biosynthesis; 5-aminolevulinate from L-glutamyl-tRNA(Glu): step 1/2. Its function is as follows. Catalyzes the NADPH-dependent reduction of glutamyl-tRNA(Glu) to glutamate 1-semialdehyde (GSA). The polypeptide is Glutamyl-tRNA reductase (Pseudomonas putida (strain W619)).